Here is a 307-residue protein sequence, read N- to C-terminus: Elongation factor Ts (307 aa).

Positions 82-85 are involved in Mg(2+) ion dislocation from EF-Tu; the sequence is TDFV.

The protein belongs to the EF-Ts family.

Its subcellular location is the cytoplasm. Functionally, associates with the EF-Tu.GDP complex and induces the exchange of GDP to GTP. It remains bound to the aminoacyl-tRNA.EF-Tu.GTP complex up to the GTP hydrolysis stage on the ribosome. The polypeptide is Elongation factor Ts (Nautilia profundicola (strain ATCC BAA-1463 / DSM 18972 / AmH)).